Consider the following 103-residue polypeptide: Co-chaperonin GroES (103 aa).

It belongs to the GroES chaperonin family. Heptamer of 7 subunits arranged in a ring. Interacts with the chaperonin GroEL.

It localises to the cytoplasm. Functionally, together with the chaperonin GroEL, plays an essential role in assisting protein folding. The GroEL-GroES system forms a nano-cage that allows encapsulation of the non-native substrate proteins and provides a physical environment optimized to promote and accelerate protein folding. GroES binds to the apical surface of the GroEL ring, thereby capping the opening of the GroEL channel. The chain is Co-chaperonin GroES from Prochlorococcus marinus (strain MIT 9312).